The primary structure comprises 413 residues: Putative adhesin P1-like protein MPN_144 (413 aa).

Polar residues-rich tracts occupy residues 1 to 13, 25 to 54, and 355 to 376; these read MGQQGQSGTSAGN, SGDSLTTQDGNATGQQEATNYTNLPPNLTP, and SFGTDHSTQPQSLKTTTPVFGT. Disordered stretches follow at residues 1-60 and 355-413; these read MGQQ…DWPN and SFGT…VSGH. Residues 385–399 are compositionally biased toward gly residues; sequence LSGGGAGGGSSGSGQ.

It belongs to the adhesin P1 family.

The sequence is that of Putative adhesin P1-like protein MPN_144 from Mycoplasma pneumoniae (strain ATCC 29342 / M129 / Subtype 1) (Mycoplasmoides pneumoniae).